Reading from the N-terminus, the 182-residue chain is Peptidyl-prolyl cis-trans isomerase H (182 aa).

One can recognise a PPIase cyclophilin-type domain in the interval 15-181; it reads FFDITLGGEP…LDVVIAQCGE (167 aa).

The protein belongs to the cyclophilin-type PPIase family. PPIase H subfamily.

It localises to the nucleus. It carries out the reaction [protein]-peptidylproline (omega=180) = [protein]-peptidylproline (omega=0). PPIases accelerate the folding of proteins. It catalyzes the cis-trans isomerization of proline imidic peptide bonds in oligopeptides. The chain is Peptidyl-prolyl cis-trans isomerase H (cyp-3) from Neurospora crassa (strain ATCC 24698 / 74-OR23-1A / CBS 708.71 / DSM 1257 / FGSC 987).